Consider the following 51-residue polypeptide: Sec-independent protein translocase protein TatA (51 aa).

Residues 1–21 (MGMSFSHLLIILLIIFVLFGA) form a helical membrane-spanning segment.

It belongs to the TatA/E family. In terms of assembly, the Tat system comprises two distinct complexes: a TatABC complex, containing multiple copies of TatA, TatB and TatC subunits, and a separate TatA complex, containing only TatA subunits. Substrates initially bind to the TatABC complex, which probably triggers association of the separate TatA complex to form the active translocon.

The protein localises to the cell inner membrane. In terms of biological role, part of the twin-arginine translocation (Tat) system that transports large folded proteins containing a characteristic twin-arginine motif in their signal peptide across membranes. TatA could form the protein-conducting channel of the Tat system. The polypeptide is Sec-independent protein translocase protein TatA (Rickettsia bellii (strain RML369-C)).